The chain runs to 20 residues: Short cationic peptide-4c (20 aa).

The residue at position 20 (glutamate 20) is a Glutamic acid 1-amide.

In terms of tissue distribution, expressed by the venom gland.

It localises to the secreted. This chain is Short cationic peptide-4c, found in Cupiennius salei (American wandering spider).